A 1612-amino-acid polypeptide reads, in one-letter code: Phospholipid-transporting ATPase DNF2 (1612 aa).

The segment at 1-74 (MSSPSKPTSP…MKDISTPDLS (74 aa)) is disordered. Residues 1–252 (MSSPSKPTSP…TFFPKNILFQ (252 aa)) are Cytoplasmic-facing. Over residues 20-30 (GSASNGLSSMS) the composition is skewed to low complexity. T70 is subject to Phosphothreonine. At S85 the chain carries Phosphoserine. Residues 253-273 (FHNFANIYFLILLILGAFQIF) form a helical membrane-spanning segment. Residues 272 to 279 (IFGVTNPG) are involved in phosphatidylcholine substrate selection. The Extracellular segment spans residues 274–277 (GVTN). The helical transmembrane segment at 278–298 (PGFASVPLIVIVIITAIKDGI) threads the bilayer. Residues 299–598 (EDSRRTVLDL…RISRELNFSV (300 aa)) are Cytoplasmic-facing. Positions 364–373 (KLQKKREELR) are enriched in basic and acidic residues. The segment at 364-384 (KLQKKREELRRKRNSRSFGPR) is disordered. A phosphoserine mark is found at S389, S392, S396, and S403. Y406 is modified (phosphotyrosine). Residues 599 to 619 (ILNFVLLFILCFTAGIVNGVY) form a helical membrane-spanning segment. Over 620–639 (YKQKPRSRDYFEFGTIGGSA) the chain is Extracellular. The involved in phosphatidylcholine substrate selection stretch occupies residues 631–635 (EFGTI). Residues 640-660 (STNGFVSFWVAVILYQSLVPI) traverse the membrane as a helical segment. Over 661-1231 (SLYISVEIIK…WCYKRLAEMI (571 aa)) the chain is Cytoplasmic. D712 serves as the catalytic 4-aspartylphosphate intermediate. The ATP site is built by D712, K713, and T714. D712 provides a ligand contact to Mg(2+). T714 contacts Mg(2+). T782 is modified (phosphothreonine). Residues E846, F887, S889, K892, and K916 each coordinate ATP. Residue K938 forms a Glycyl lysine isopeptide (Lys-Gly) (interchain with G-Cter in ubiquitin) linkage. Residues R952, T953, T1032, G1033, D1034, R1147, and K1153 each coordinate ATP. Residue D1173 participates in Mg(2+) binding. 2 residues coordinate ATP: N1176 and D1177. Mg(2+) is bound at residue D1177. A helical membrane pass occupies residues 1232 to 1252 (PQFFYKNVIFTLSLFWYGIYN). Over 1253–1262 (NFDGSYLFEY) the chain is Extracellular. Residues 1263 to 1283 (TYLTFYNLAFTSVPVILLAVL) form a helical membrane-spanning segment. Over 1284-1313 (DQDVSDTVSMLVPQLYRVGILRKEWNQTKF) the chain is Cytoplasmic. The helical transmembrane segment at 1314-1334 (LWYMLDGVYQSVICFFFPYLA) threads the bilayer. Topologically, residues 1335 to 1350 (YHKNMVVTENGLGLDH) are extracellular. Residues 1351-1371 (RYFVGVFVTAIAVTSCNFYVF) traverse the membrane as a helical segment. Over 1372 to 1377 (MEQYRW) the chain is Cytoplasmic. The chain crosses the membrane as a helical span at residues 1378 to 1398 (DWFCGLFICLSLAVFYGWTGI). The Extracellular segment spans residues 1399 to 1418 (WTSSSSSNEFYKGAARVFAQ). A helical membrane pass occupies residues 1419–1439 (PAYWAVLFVGVLFCLLPRFTI). Position 1436 (R1436) interacts with a 1,2-diacyl-sn-glycero-3-phospho-L-serine. Topologically, residues 1440–1612 (DCIRKIFYPK…TLLSQRSRDR (173 aa)) are cytoplasmic. A Phosphoserine modification is found at S1542. Residues 1544-1563 (VTTTNNLPRRSMASARGNKL) form a disordered region. S1592 carries the post-translational modification Phosphoserine.

Belongs to the cation transport ATPase (P-type) (TC 3.A.3) family. Type IV subfamily. Component of a flippase complex consisting of DNF1 and LEM3. Interacts with LEM3; the interaction is direct. The cofactor is Mg(2+). In terms of processing, phosphorylated by FPK1 and KIN82.

The protein localises to the cell membrane. The enzyme catalyses ATP + H2O + phospholipidSide 1 = ADP + phosphate + phospholipidSide 2.. It catalyses the reaction a 1,2-diacyl-sn-glycero-3-phosphoethanolamine(out) + ATP + H2O = a 1,2-diacyl-sn-glycero-3-phosphoethanolamine(in) + ADP + phosphate + H(+). The catalysed reaction is a 1,2-diacyl-sn-glycero-3-phosphocholine(out) + ATP + H2O = a 1,2-diacyl-sn-glycero-3-phosphocholine(in) + ADP + phosphate + H(+). It carries out the reaction a beta-D-glucosyl-(1&lt;-&gt;1')-N-acylsphing-4-enine(out) + ATP + H2O = a beta-D-glucosyl-(1&lt;-&gt;1')-N-acylsphing-4-enine(in) + ADP + phosphate + H(+). The enzyme catalyses a 1,2-diacyl-sn-glycero-3-phospho-L-serine(out) + ATP + H2O = a 1,2-diacyl-sn-glycero-3-phospho-L-serine(in) + ADP + phosphate + H(+). Its activity is regulated as follows. Phosphatidylcholine flippase activity is inhibited by glucosylsphingosine, lactosylsphingosine, lysophosphatidylcholine and to a lesser degree sphingosine-1-phosphate and lysosphingomyelin. Glucosylceramide flippase activity is inhibited by lysophosphatidylcholine, glucosylsphingosine and to a lesser degree lactosylsphingosine whereas lysosphingomyelin has a stimulatory effect at low concentrations. Catalytic component of a P4-ATPase flippase complex which catalyzes the hydrolysis of ATP coupled to the transport of glucosylceramide, phosphatidylcholine, phosphatidylethanolamine, and small amounts of phosphatidylserine from the lumenal to the cytosolic leaflet of the cell membrane and ensures the maintenance of asymmetric distribution of phospholipids. Does not appear to transport sphingomyelin, inositol phosphoceramide or phosphatidic acid. Required for efficient endocytosis. Required for protein transport from Golgi to vacuoles. The protein is Phospholipid-transporting ATPase DNF2 (DNF2) of Saccharomyces cerevisiae (strain ATCC 204508 / S288c) (Baker's yeast).